The chain runs to 270 residues: 3-methyl-2-oxobutanoate hydroxymethyltransferase (270 aa).

Residues D43 and D82 each coordinate Mg(2+). 3-methyl-2-oxobutanoate is bound by residues 43–44, D82, and K112; that span reads DS. E114 is a binding site for Mg(2+). The Proton acceptor role is filled by E179.

Belongs to the PanB family. In terms of assembly, homodecamer; pentamer of dimers. The cofactor is Mg(2+).

The protein resides in the cytoplasm. It catalyses the reaction 3-methyl-2-oxobutanoate + (6R)-5,10-methylene-5,6,7,8-tetrahydrofolate + H2O = 2-dehydropantoate + (6S)-5,6,7,8-tetrahydrofolate. The protein operates within cofactor biosynthesis; (R)-pantothenate biosynthesis; (R)-pantoate from 3-methyl-2-oxobutanoate: step 1/2. Its function is as follows. Catalyzes the reversible reaction in which hydroxymethyl group from 5,10-methylenetetrahydrofolate is transferred onto alpha-ketoisovalerate to form ketopantoate. In Staphylococcus carnosus (strain TM300), this protein is 3-methyl-2-oxobutanoate hydroxymethyltransferase.